We begin with the raw amino-acid sequence, 169 residues long: Succinate dehydrogenase cytochrome b560 subunit, mitochondrial (169 aa).

The transit peptide at 1 to 29 (MAALLLRHVGRHCLRAHFSPQLCIRNAVP) directs the protein to the mitochondrion. At 30–65 (LGTTAKEEMERFWNKNIGSNRPLSPHITIYSWSLPM) the chain is on the mitochondrial matrix side. Residues 66 to 90 (AMSICHRGTGIALSAGVSLFGMSAL) form a helical membrane-spanning segment. At 91–110 (LLPGNFESYLELVKSLCLGP) the chain is on the mitochondrial intermembrane side. Residues 111-139 (ALIHTAKFALVFPLMYHTWNGIRHLMWDL) traverse the membrane as a helical segment. Residue histidine 127 coordinates heme b. Topologically, residues 140 to 146 (GKGLKIP) are mitochondrial matrix. A helical membrane pass occupies residues 147 to 167 (QLYQSGVVVLVLTVLSSMGLA). Residues 168 to 169 (AM) lie on the Mitochondrial intermembrane side of the membrane.

It belongs to the cytochrome b560 family. Component of complex II composed of four subunits: the flavoprotein (FP) SDHA, iron-sulfur protein (IP) SDHB, and a cytochrome b560 composed of SDHC and SDHD. The cofactor is heme b.

The protein localises to the mitochondrion inner membrane. The protein operates within carbohydrate metabolism; tricarboxylic acid cycle. Its function is as follows. Membrane-anchoring subunit of succinate dehydrogenase (SDH) that is involved in complex II of the mitochondrial electron transport chain and is responsible for transferring electrons from succinate to ubiquinone (coenzyme Q). SDH also oxidizes malate to the non-canonical enol form of oxaloacetate, enol-oxaloacetate. Enol-oxaloacetate, which is a potent inhibitor of the succinate dehydrogenase activity, is further isomerized into keto-oxaloacetate. This chain is Succinate dehydrogenase cytochrome b560 subunit, mitochondrial (SDHC), found in Homo sapiens (Human).